The chain runs to 200 residues: Histone chaperone asf1a-B (200 aa).

The protein belongs to the ASF1 family. As to quaternary structure, interacts with histone H3 (including both histone H3.1 and H3.3) and histone H4.

The protein resides in the nucleus. Functionally, histone chaperone that facilitates histone deposition and histone exchange and removal during nucleosome assembly and disassembly. This chain is Histone chaperone asf1a-B (asf1ab), found in Xenopus laevis (African clawed frog).